Reading from the N-terminus, the 541-residue chain is MFSWMGRQAGGRERSGGMDAVQTVTGGLRSLYQRKVLPLEEAYRFHEFHSPALEDADFENKPMILLVGQYSTGKTTFIRYLLEQDFPGMRIGPEPTTDSFIAVMYGETEGSTPGNALVVDPKKPFRKLSRFGNAFLNRFMCSQLPNQVLKSISIIDSPGILSGEKQRISRGYDFCQVLQWFAERVDRIILLFDAHKLDISDEFSEAIKAFRGQDDKIRVVLNKADQVDTQQLMRVYGALMWSLGKVINTPEVLRVYIGSFWAQPLQNTDNRRLFEAEAQDLFRDIQSLPQKAAVRKLNDLIKRARLAKVHAYIISYLKKEMPNMFGKENKKRELIYRLPEIYVQLQREYQISAGDFPEVKAMQEQLENYDFTKFHSLKPKLIEAVDNMLTNKISSLMGLISQEEMNMPTQMVQGGAFDGTTEGPFNQGYGEGAKEGADEEEWVVAKDKPVYDELFYTLSPINGKISGVNAKKEMVTSKLPNSVLGKIWKLADCDCDGMLDEEEFALAKHLIKIKLDGYELPNSLPPHLVPPSHRKSLPKAD.

Methionine 1 is subject to N-acetylmethionine. The tract at residues 1 to 20 is disordered; the sequence is MFSWMGRQAGGRERSGGMDA. Serine 15 carries the phosphoserine modification. Residues 58–289 form the Dynamin-type G domain; sequence FENKPMILLV…DLFRDIQSLP (232 aa). The interval 68-75 is G1 motif; it reads GQYSTGKT. 68 to 75 serves as a coordination point for ATP; it reads GQYSTGKT. A G2 motif region spans residues 94-95; the sequence is EP. The G3 motif stretch occupies residues 156 to 159; sequence DSPG. Phosphoserine is present on serine 162. The tract at residues 222 to 225 is G4 motif; that stretch reads NKAD. Lysine 223 is a binding site for ATP. Position 246 (valine 246) is a region of interest, G5 motif. Tryptophan 261 provides a ligand contact to ATP. Residues 447–535 form the EH domain; that stretch reads DKPVYDELFY…PHLVPPSHRK (89 aa). Tyrosine 451 is subject to Phosphotyrosine. Position 459 is a phosphoserine (serine 459). The 36-residue stretch at 479 to 514 folds into the EF-hand domain; sequence LPNSVLGKIWKLADCDCDGMLDEEEFALAKHLIKIK. Residues aspartate 492, aspartate 494, aspartate 496, methionine 498, and glutamate 503 each coordinate Ca(2+).

Belongs to the TRAFAC class dynamin-like GTPase superfamily. Dynamin/Fzo/YdjA family. EHD subfamily. In terms of assembly, homooligomer, and heterooligomer with EHD1, EHD2 and EHD3. Forms a complex with EHD4 and MICALL1; the complex controls CDH5 trafficking and coordinates angiogenesis.

It localises to the early endosome membrane. Its subcellular location is the recycling endosome membrane. It is found in the cell membrane. The protein resides in the cell junction. The protein localises to the adherens junction. ATP- and membrane-binding protein that probably controls membrane reorganization/tubulation upon ATP hydrolysis. Plays a role in early endosomal transport. During sprouting angiogenesis, in complex with PACSIN2 and MICALL1, forms recycling endosome-like tubular structure at asymmetric adherens junctions to control CDH5 trafficking. The protein is EH domain-containing protein 4 of Mus musculus (Mouse).